A 417-amino-acid chain; its full sequence is Tol-Pal system protein TolB (417 aa).

The signal sequence occupies residues 1–16 (MRYLWLFLIHTIGLFA).

This sequence belongs to the TolB family. As to quaternary structure, the Tol-Pal system is composed of five core proteins: the inner membrane proteins TolA, TolQ and TolR, the periplasmic protein TolB and the outer membrane protein Pal. They form a network linking the inner and outer membranes and the peptidoglycan layer.

Its subcellular location is the periplasm. Its function is as follows. Part of the Tol-Pal system, which plays a role in outer membrane invagination during cell division and is important for maintaining outer membrane integrity. This chain is Tol-Pal system protein TolB, found in Helicobacter pylori (strain ATCC 700392 / 26695) (Campylobacter pylori).